We begin with the raw amino-acid sequence, 629 residues long: Replication protein A 70 kDa DNA-binding subunit D (629 aa).

The segment at 112 to 135 (LDSKSGEEEAREPKKQKLEHSPVS) is disordered. Over residues 115-131 (KSGEEEAREPKKQKLEH) the composition is skewed to basic and acidic residues. The segment at residues 194-280 (WTIKVRVTNK…QNDYEMTLNE (87 aa)) is a DNA-binding region (OB). Residues 492–512 (CKTCNKKVTEALDSGYWCEGC) form a C4-type zinc finger.

Belongs to the replication factor A protein 1 family. As to quaternary structure, heterotrimer of RPA1, RPA2 and RPA3 (canonical replication protein A complex).

It is found in the nucleus. Functionally, component of the replication protein A complex (RPA) required for DNA recombination, repair and replication. The activity of RPA is mediated by single-stranded DNA binding and protein interactions. Probably involved in repair of double-strand DNA breaks (DSBs) induced by genotoxic stresses. This Arabidopsis thaliana (Mouse-ear cress) protein is Replication protein A 70 kDa DNA-binding subunit D (RPA1D).